The following is a 156-amino-acid chain: Small ribosomal subunit protein uS7 (156 aa).

Belongs to the universal ribosomal protein uS7 family. As to quaternary structure, part of the 30S ribosomal subunit. Contacts proteins S9 and S11.

One of the primary rRNA binding proteins, it binds directly to 16S rRNA where it nucleates assembly of the head domain of the 30S subunit. Is located at the subunit interface close to the decoding center, probably blocks exit of the E-site tRNA. The protein is Small ribosomal subunit protein uS7 of Bacillus cereus (strain B4264).